A 352-amino-acid polypeptide reads, in one-letter code: Guanine nucleotide-binding protein alpha-7 subunit (352 aa).

G2 carries the N-myristoyl glycine lipid modification. C4 is lipidated: S-palmitoyl cysteine. A G-alpha domain is found at 32–352; that stretch reads RIIKLLLLGA…AKNLKSMGLC (321 aa). The G1 motif stretch occupies residues 35 to 48; the sequence is KLLLLGAGESGKST. Residues 40–47, 174–180, 199–203, 268–271, and A324 contribute to the GTP site; these read GAGESGKS, LRTRIKT, DVGGQ, and NKKD. S47 and T180 together coordinate Mg(2+). Residues 172–180 are G2 motif; it reads DLLRTRIKT. Positions 195 to 204 are G3 motif; the sequence is FRVIDVGGQR. The segment at 264 to 271 is G4 motif; sequence ILFLNKKD. A G5 motif region spans residues 322–327; it reads TCATDT.

It belongs to the G-alpha family. G(i/o/t/z) subfamily. G proteins are composed of 3 units; alpha, beta and gamma. The alpha chain contains the guanine nucleotide binding site.

Guanine nucleotide-binding proteins (G proteins) are involved as modulators or transducers in various transmembrane signaling systems. The polypeptide is Guanine nucleotide-binding protein alpha-7 subunit (gpa-7) (Caenorhabditis elegans).